The following is a 437-amino-acid chain: Doublesex- and mab-3-related transcription factor A2 (437 aa).

The DM DNA-binding region spans 49–96; sequence CARCRNHGVVSALKGHKRYCRWKDCMCAKCTLIAERQRVMAAQVALRR. Disordered stretches follow at residues 163–254 and 297–317; these read SVTP…ARQR and DKSE…PSVS. 2 stretches are compositionally biased toward low complexity: residues 179-201 and 223-235; these read SESV…SGSE and SPSS…SESG. Residues 254–289 enclose the DMA domain; it reads RTPIDILTRVFPAQKRSVLELVLQGCGGDVVQAIEQ.

It belongs to the DMRT family.

Its subcellular location is the nucleus. Functionally, may be involved in sexual development. In Xenopus tropicalis (Western clawed frog), this protein is Doublesex- and mab-3-related transcription factor A2 (dmrta2).